Reading from the N-terminus, the 103-residue chain is Large ribosomal subunit protein bL21 (103 aa).

This sequence belongs to the bacterial ribosomal protein bL21 family. As to quaternary structure, part of the 50S ribosomal subunit. Contacts protein L20.

Functionally, this protein binds to 23S rRNA in the presence of protein L20. The chain is Large ribosomal subunit protein bL21 from Shewanella pealeana (strain ATCC 700345 / ANG-SQ1).